Here is a 197-residue protein sequence, read N- to C-terminus: Transcription factor FapR (197 aa).

The protein belongs to the FapR family.

In terms of biological role, transcriptional factor involved in regulation of membrane lipid biosynthesis by repressing genes involved in fatty acid and phospholipid metabolism. In Bacillus cereus (strain B4264), this protein is Transcription factor FapR.